The sequence spans 832 residues: DNA polymerase I, thermostable (832 aa).

Residues 175–260 (RPDQWADYRA…DLPLEVDFAK (86 aa)) form the 5'-3' exonuclease domain. Residues 410–832 (ERLFANLWGR…IGEDWLSAKE (423 aa)) form a polymerase region.

Belongs to the DNA polymerase type-A family.

It catalyses the reaction DNA(n) + a 2'-deoxyribonucleoside 5'-triphosphate = DNA(n+1) + diphosphate. In addition to polymerase activity, this DNA polymerase exhibits 5'-3' exonuclease activity. Unlikely to have 3'-5' exonuclease activity due to absence of a 3'-5' exonuclease domain. The protein is DNA polymerase I, thermostable (polA) of Thermus aquaticus.